The sequence spans 378 residues: Erythronate-4-phosphate dehydrogenase (378 aa).

Substrate-binding residues include Ser45 and Thr66. Residues Asp146 and Thr175 each contribute to the NAD(+) site. Residue Arg208 is part of the active site. Position 232 (Asp232) interacts with NAD(+). Residue Glu237 is part of the active site. Residue His254 is the Proton donor of the active site. An NAD(+)-binding site is contributed by Gly257. Tyr258 lines the substrate pocket.

The protein belongs to the D-isomer specific 2-hydroxyacid dehydrogenase family. PdxB subfamily. In terms of assembly, homodimer.

Its subcellular location is the cytoplasm. The enzyme catalyses 4-phospho-D-erythronate + NAD(+) = (R)-3-hydroxy-2-oxo-4-phosphooxybutanoate + NADH + H(+). It participates in cofactor biosynthesis; pyridoxine 5'-phosphate biosynthesis; pyridoxine 5'-phosphate from D-erythrose 4-phosphate: step 2/5. In terms of biological role, catalyzes the oxidation of erythronate-4-phosphate to 3-hydroxy-2-oxo-4-phosphonooxybutanoate. This chain is Erythronate-4-phosphate dehydrogenase, found in Escherichia coli O6:H1 (strain CFT073 / ATCC 700928 / UPEC).